Reading from the N-terminus, the 124-residue chain is Probable 5-hydroxyisourate hydrolase (124 aa).

Residues H16, R57, and Y121 each contribute to the substrate site.

This sequence belongs to the transthyretin family. 5-hydroxyisourate hydrolase subfamily. In terms of assembly, homotetramer.

It carries out the reaction 5-hydroxyisourate + H2O = 5-hydroxy-2-oxo-4-ureido-2,5-dihydro-1H-imidazole-5-carboxylate + H(+). Functionally, catalyzes the hydrolysis of 5-hydroxyisourate (HIU) to 2-oxo-4-hydroxy-4-carboxy-5-ureidoimidazoline (OHCU). The sequence is that of Probable 5-hydroxyisourate hydrolase from Schizosaccharomyces pombe (strain 972 / ATCC 24843) (Fission yeast).